The sequence spans 553 residues: Putative transport protein YidE (553 aa).

5 helical membrane passes run 4-24, 28-48, 65-85, 95-115, and 158-178; these read IALTVSVLALVAVVGLWIGNI, GVGFGIGGVLFGGIIVGHFVD, FGLILFVYTIGIQVGPGFFAS, LFAVLIVIMGGLVTAILHKIF, and MSYAMAYPFGICGILLTMWLM. 2 RCK C-terminal domains span residues 192-276 and 279-361; these read KHES…VIGK and DTSL…VVGN. 6 consecutive transmembrane segments (helical) span residues 371–391, 393–413, 437–457, 464–484, 493–513, and 533–553; these read MLPVFIGIGLGVLLGSIPLFV, GFPVALKLGLAGGPLIMALIL, LGIVLFLAVVGLKSGGDFVDT, LSWIGYGIFITAIPLITIGLL, YLTLCGMLAGSMTDPPALAFA, and LVMFLRIITPQLLAVIFWGMG.

It belongs to the AAE transporter (TC 2.A.81) family. YidE subfamily.

The protein localises to the cell membrane. In Salmonella paratyphi C (strain RKS4594), this protein is Putative transport protein YidE.